The primary structure comprises 262 residues: Ribosome-recycling factor, mitochondrial (262 aa).

A mitochondrion-targeting transit peptide spans 1–55 (MASGIRCFRLLHPAFRSYHAALTRPVSEVSMKTVSGRQHGHRQYSAYPAVPVRHF).

Belongs to the RRF family.

It is found in the mitochondrion. In terms of biological role, responsible for the disassembly of ribosomes from messenger RNA at the termination of mitochondrial protein biosynthesis. Acts in collaboration with GFM2. Promotes mitochondrial ribosome recycling by dissolution of intersubunit contacts. This chain is Ribosome-recycling factor, mitochondrial (Mrrf), found in Mus musculus (Mouse).